A 426-amino-acid chain; its full sequence is Histidine--tRNA ligase (426 aa).

It belongs to the class-II aminoacyl-tRNA synthetase family.

The protein localises to the cytoplasm. It carries out the reaction tRNA(His) + L-histidine + ATP = L-histidyl-tRNA(His) + AMP + diphosphate + H(+). This Saccharolobus solfataricus (strain ATCC 35092 / DSM 1617 / JCM 11322 / P2) (Sulfolobus solfataricus) protein is Histidine--tRNA ligase.